Consider the following 454-residue polypeptide: MSTRNSQSIRSSCDRCRSHKLKCTVSPEDSRSGPHKCTRCIRAQVTCVFGPRSQSKRTPNGKNKPEKPKPELEPPQKTSPPVCSSSLAGMDLGSPGAWTPWIDDLASQETEEPLPIDVNTAGDGSGPSDGDFWADLGMTQELNMLELAPTNTYQAQYLASFDYVAPPVAEVGHLMDISEPSEHTPPHAIVQLSTLVTKIHETSKALEESPWSNVPDAKQLQNYPIGRVLSLSQDFCSILGCIWGKVSISSDGQSSGSGSSPTPSADMLDYAEVLSSIKITQDPTASSSMAASVDMPTALLVLSCYTSLIKLYSLVFAHFENHLSHLPEIPSPYPSQAALASHRWGLQLGELPSADETCTKICTAVQVLLDAFQSVEDVFGLPRSFSAVRQRTCDMEGMDFSAELGRTSLWTDYMVHFVVRSNAIRADTEECEEMRELSTKVRSLKALIREKMNL.

The segment at residues 13-47 (CDRCRSHKLKCTVSPEDSRSGPHKCTRCIRAQVTC) is a DNA-binding region (zn(2)-C6 fungal-type). Residues 51–89 (PRSQSKRTPNGKNKPEKPKPELEPPQKTSPPVCSSSLAG) are disordered. Polar residues predominate over residues 52–61 (RSQSKRTPNG). Positions 63 to 74 (NKPEKPKPELEP) are enriched in basic and acidic residues.

The protein resides in the nucleus. In terms of biological role, transcription factor that regulates the expression of the gene cluster that mediates the biosynthesis of trichosetin, a trans-fused decalin-containing tetramic acid with antimicrobial activity. Directly activates expression of only the three biosynthetic genes PKS-NRPS1, DA and ER, while TF23 and MFS-T are induced by the final product trichosetin and not by TF22. The sequence is that of Trichosetin biosynthesis cluster transcription factor TF22 from Gibberella fujikuroi (strain CBS 195.34 / IMI 58289 / NRRL A-6831) (Bakanae and foot rot disease fungus).